Here is a 315-residue protein sequence, read N- to C-terminus: MQESLNSNDFKEYAAKKAKHITSAKNIAPLLECIASLPTIPSHFYSDNGIHIVAQDKTLAQKYHKAIYTLATQLKPWRKGPFFLFDIHIDSEWQSFMKWQLLAPHCNLEGKYIADVGCNNGYYMFEMLLQGKKLYKKIIGFDPSGIFKCQFDFINHFINAPIEFELLGVEDLLAYSQAHNQSFDVIFCLGVLYHRFDPINTLKILSQSLNKGGELILDTLIYESNEEICLCPAQSYAKMSNVYFIPSIPTLKGWCERANLYDFEVINLTPTTTQEQRQSAWVDSQSLSAFLNETQTRTIEGYQAPLRGYFKLKKR.

Residues Lys79, Trp93, Lys98, Gly117, 142 to 144 (DPS), 169 to 170 (VE), Tyr193, and Arg307 each bind carboxy-S-adenosyl-L-methionine.

It belongs to the class I-like SAM-binding methyltransferase superfamily. CmoB family. In terms of assembly, homotetramer.

It catalyses the reaction carboxy-S-adenosyl-L-methionine + 5-hydroxyuridine(34) in tRNA = 5-carboxymethoxyuridine(34) in tRNA + S-adenosyl-L-homocysteine + H(+). Functionally, catalyzes carboxymethyl transfer from carboxy-S-adenosyl-L-methionine (Cx-SAM) to 5-hydroxyuridine (ho5U) to form 5-carboxymethoxyuridine (cmo5U) at position 34 in tRNAs. The sequence is that of tRNA U34 carboxymethyltransferase from Helicobacter hepaticus (strain ATCC 51449 / 3B1).